An 825-amino-acid chain; its full sequence is Probable inorganic carbon transporter subunit DabA (825 aa).

Residues Cys-346, Asp-348, His-516, and Cys-531 each contribute to the Zn(2+) site.

Belongs to the inorganic carbon transporter (TC 9.A.2) DabA family. As to quaternary structure, forms a complex with DabB. Requires Zn(2+) as cofactor.

The protein resides in the cell inner membrane. In terms of biological role, part of an energy-coupled inorganic carbon pump. This Paracidovorax citrulli (strain AAC00-1) (Acidovorax citrulli) protein is Probable inorganic carbon transporter subunit DabA.